An 83-amino-acid chain; its full sequence is Phytosulfokines 4 (83 aa).

The signal sequence occupies residues 1-28 (MAARTVAVAAALAVLLIFAASSATVAMA). The propeptide occupies 29–74 (GRPTPTTSLDEEAAQAAAQSEIGGGCKEGEGEEECLARRTLTAHTD). Sulfotyrosine is present on residues Tyr-75 and Tyr-77. Positions 80-83 (QHHN) are excised as a propeptide.

Belongs to the phytosulfokine family. Sulfation is important for activity and for the binding to a putative membrane receptor. Post-translationally, PSK-alpha is produced by endopeptidase digestion. PSK-beta is produced from PSK-alpha by exopeptidase digestion.

It localises to the secreted. Functionally, promotes plant cell differentiation, organogenesis and somatic embryogenesis as well as cell proliferation. In Oryza sativa subsp. japonica (Rice), this protein is Phytosulfokines 4 (PSK4).